The primary structure comprises 298 residues: Transcription factor RHD6 (298 aa).

Disordered regions lie at residues 1–58 (MALV…SDHQ) and 157–213 (TGSR…AKNR). A compositionally biased stretch (low complexity) spans 15–27 (SKQNSSSSEDLSS). Polar residues-rich tracts occupy residues 157 to 168 (TGSRNESLSPKS) and 177 to 190 (GESTQPSKKLSSGV). Residues 191 to 205 (TGKTKPKPTTSPKDP) show a composition bias toward low complexity. The segment at 201 to 214 (SPKDPQSLAAKNRR) is basic motif. The bHLH domain occupies 201 to 250 (SPKDPQSLAAKNRRERISERLKILQELVPNGTKVDLVTMLEKAISYVKFL). Positions 215–250 (ERISERLKILQELVPNGTKVDLVTMLEKAISYVKFL) are helix-loop-helix motif.

As to quaternary structure, homodimer. Forms heterodimers with RSL1. Interacts with TIFY10B/JAZ2, TIFY6A/JAZ4, TIFY5A/JAZ8, TIFY7/JAZ9 and TIFY9/JAZ10. In terms of tissue distribution, expressed constitutively in flowers. Expressed in root epidermal hair cells.

The protein localises to the nucleus. In terms of biological role, transcription factor that is specifically required for the development of root hairs. Acts with RSL1 to positively regulate root hair development. Acts downstream of genes that regulate epidermal pattern formation, such as GL2. Targets directly RSL4, another transcription factor involved in the regulation of root hair elongation. Acts with RSL1 as transcription factor that integrates a jasmonate (JA) signaling pathway that stimulates root hair growth. This Arabidopsis thaliana (Mouse-ear cress) protein is Transcription factor RHD6.